Here is a 594-residue protein sequence, read N- to C-terminus: APOBEC1 complementation factor (594 aa).

RRM domains are found at residues 56–134, 136–218, and 231–303; these read CEIF…ASVD, CRLF…WAEP, and KILY…LAKP. The required for nuclear localization stretch occupies residues 360 to 409; that stretch reads HFPATKGHLSNRAIIRAPSVREIYMNVPVGAAGVRGLGGRGYLAYTGLGR. Thr499 carries the post-translational modification Phosphothreonine.

Part of the apolipoprotein B mRNA editing complex with APOBEC1. Interacts with TNPO2; TNPO2 may be responsible for transport of A1CF into the nucleus. Interacts with SYNCRIP. Interacts with CELF2/CUGBP2. Interacts with RBM47. In terms of tissue distribution, widely expressed with highest levels in brain, liver, pancreas, colon and spleen.

It is found in the nucleus. It localises to the endoplasmic reticulum. The protein resides in the cytoplasm. Its function is as follows. Essential component of the apolipoprotein B mRNA editing enzyme complex which is responsible for the postranscriptional editing of a CAA codon for Gln to a UAA codon for stop in APOB mRNA. Binds to APOB mRNA and is probably responsible for docking the catalytic subunit, APOBEC1, to the mRNA to allow it to deaminate its target cytosine. The complex also protects the edited APOB mRNA from nonsense-mediated decay. The chain is APOBEC1 complementation factor (A1CF) from Homo sapiens (Human).